Here is a 339-residue protein sequence, read N- to C-terminus: tRNA N6-adenosine threonylcarbamoyltransferase (339 aa).

Fe cation-binding residues include His112 and His116. Substrate contacts are provided by residues 135-139 (LVSGG), Asp168, Gly181, and Asn273. Asp301 lines the Fe cation pocket.

The protein belongs to the KAE1 / TsaD family. The cofactor is Fe(2+).

The protein localises to the cytoplasm. The catalysed reaction is L-threonylcarbamoyladenylate + adenosine(37) in tRNA = N(6)-L-threonylcarbamoyladenosine(37) in tRNA + AMP + H(+). In terms of biological role, required for the formation of a threonylcarbamoyl group on adenosine at position 37 (t(6)A37) in tRNAs that read codons beginning with adenine. Is involved in the transfer of the threonylcarbamoyl moiety of threonylcarbamoyl-AMP (TC-AMP) to the N6 group of A37, together with TsaE and TsaB. TsaD likely plays a direct catalytic role in this reaction. This chain is tRNA N6-adenosine threonylcarbamoyltransferase, found in Coxiella burnetii (strain RSA 493 / Nine Mile phase I).